Consider the following 180-residue polypeptide: CASP-like protein 2A3 (180 aa).

The Cytoplasmic segment spans residues 1-13 (MELIYGSTMRKKW). Residues 14-34 (IEPALRFLPVGLCISALALML) traverse the membrane as a helical segment. Residues 35 to 55 (KSKEGNENGILEYKHVGAFRY) lie on the Extracellular side of the membrane. The chain crosses the membrane as a helical span at residues 56-76 (LAYANGICAAYSVLSTFNSVV). Residues 77–85 (PRSCSLSRA) lie on the Cytoplasmic side of the membrane. Residues 86–106 (WFVFVFDQAFTYLMLGAGAVV) traverse the membrane as a helical segment. Topologically, residues 107–135 (TEVLYLAYKGDEKITWFEICPYYGRFCNR) are extracellular. A helical transmembrane segment spans residues 136–156 (VAASLVISFLALLCFIPLSLI). The Cytoplasmic portion of the chain corresponds to 157 to 180 (SAYRVFSKYDPPSLCKKDQITSQS).

This sequence belongs to the Casparian strip membrane proteins (CASP) family. In terms of assembly, homodimer and heterodimers.

It localises to the cell membrane. The sequence is that of CASP-like protein 2A3 from Picea sitchensis (Sitka spruce).